The primary structure comprises 106 residues: Chaperone modulatory protein CbpM (106 aa).

Belongs to the CbpM family.

Functionally, interacts with CbpA and inhibits both the DnaJ-like co-chaperone activity and the DNA binding activity of CbpA. Together with CbpA, modulates the activity of the DnaK chaperone system. Does not inhibit the co-chaperone activity of DnaJ. This Coxiella burnetii (strain CbuK_Q154) (Coxiella burnetii (strain Q154)) protein is Chaperone modulatory protein CbpM.